We begin with the raw amino-acid sequence, 218 residues long: Large ribosomal subunit protein mL54 (218 aa).

Belongs to the mitochondrion-specific ribosomal protein mL54 family. As to quaternary structure, component of the mitochondrial large ribosomal subunit (mt-LSU). Mature N.crassa 74S mitochondrial ribosomes consist of a small (37S) and a large (54S) subunit. The 37S small subunit contains a 16S ribosomal RNA (16S mt-rRNA) and 32 different proteins. The 54S large subunit contains a 23S rRNA (23S mt-rRNA) and 42 different proteins.

It is found in the mitochondrion. In terms of biological role, component of the mitochondrial ribosome (mitoribosome), a dedicated translation machinery responsible for the synthesis of mitochondrial genome-encoded proteins, including at least some of the essential transmembrane subunits of the mitochondrial respiratory chain. The mitoribosomes are attached to the mitochondrial inner membrane and translation products are cotranslationally integrated into the membrane. The chain is Large ribosomal subunit protein mL54 (mrpl37) from Neurospora crassa (strain ATCC 24698 / 74-OR23-1A / CBS 708.71 / DSM 1257 / FGSC 987).